Consider the following 201-residue polypeptide: Pyridoxine/pyridoxamine 5'-phosphate oxidase (201 aa).

Residues 45 to 50 (RMVLLK), 65 to 66 (YT), arginine 71, lysine 72, and glutamine 94 contribute to the FMN site. Residue lysine 50 coordinates substrate. Substrate contacts are provided by tyrosine 112, arginine 116, and serine 120. Residues 129–130 (QS) and tryptophan 174 each bind FMN. 180-182 (RLH) is a binding site for substrate. An FMN-binding site is contributed by arginine 184.

This sequence belongs to the pyridoxamine 5'-phosphate oxidase family. In terms of assembly, homodimer. It depends on FMN as a cofactor.

The enzyme catalyses pyridoxamine 5'-phosphate + O2 + H2O = pyridoxal 5'-phosphate + H2O2 + NH4(+). It carries out the reaction pyridoxine 5'-phosphate + O2 = pyridoxal 5'-phosphate + H2O2. It functions in the pathway cofactor metabolism; pyridoxal 5'-phosphate salvage; pyridoxal 5'-phosphate from pyridoxamine 5'-phosphate: step 1/1. It participates in cofactor metabolism; pyridoxal 5'-phosphate salvage; pyridoxal 5'-phosphate from pyridoxine 5'-phosphate: step 1/1. Its function is as follows. Catalyzes the oxidation of either pyridoxine 5'-phosphate (PNP) or pyridoxamine 5'-phosphate (PMP) into pyridoxal 5'-phosphate (PLP). The sequence is that of Pyridoxine/pyridoxamine 5'-phosphate oxidase from Rhodospirillum rubrum (strain ATCC 11170 / ATH 1.1.1 / DSM 467 / LMG 4362 / NCIMB 8255 / S1).